A 424-amino-acid chain; its full sequence is Serine--tRNA ligase (424 aa).

230-232 (TAE) serves as a coordination point for L-serine. ATP is bound at residue 261 to 263 (RSE). An L-serine-binding site is contributed by E284. 348–351 (EISS) contacts ATP. Residue S384 coordinates L-serine.

This sequence belongs to the class-II aminoacyl-tRNA synthetase family. Type-1 seryl-tRNA synthetase subfamily. Homodimer. The tRNA molecule binds across the dimer.

Its subcellular location is the cytoplasm. The catalysed reaction is tRNA(Ser) + L-serine + ATP = L-seryl-tRNA(Ser) + AMP + diphosphate + H(+). It catalyses the reaction tRNA(Sec) + L-serine + ATP = L-seryl-tRNA(Sec) + AMP + diphosphate + H(+). It functions in the pathway aminoacyl-tRNA biosynthesis; selenocysteinyl-tRNA(Sec) biosynthesis; L-seryl-tRNA(Sec) from L-serine and tRNA(Sec): step 1/1. Catalyzes the attachment of serine to tRNA(Ser). Is also able to aminoacylate tRNA(Sec) with serine, to form the misacylated tRNA L-seryl-tRNA(Sec), which will be further converted into selenocysteinyl-tRNA(Sec). The polypeptide is Serine--tRNA ligase (Streptococcus pneumoniae (strain Hungary19A-6)).